Here is a 97-residue protein sequence, read N- to C-terminus: HssA/B-like protein 44 (97 aa).

Disordered regions lie at residues 1–22 and 62–97; these read MTLF…SSIA and ASTS…CGCN. A compositionally biased stretch (basic residues) spans 72–84; it reads RPGRGHGGPHGHG. Gly residues predominate over residues 85–97; the sequence is RGGSGSGSSCGCN.

Belongs to the hssA/B family.

The chain is HssA/B-like protein 44 (hssl44) from Dictyostelium discoideum (Social amoeba).